Reading from the N-terminus, the 487-residue chain is Probable aspartic-type endopeptidase opsB (487 aa).

An N-terminal signal peptide occupies residues 1–20; the sequence is MQKSWLVLLVACLGLQGTTA. A Peptidase A1 domain is found at 69-398; it reads YFCNITLGTP…DLSNNEISLA (330 aa). N-linked (GlcNAc...) asparagine glycosylation is present at asparagine 72. Aspartate 87 is an active-site residue. Residues asparagine 99, asparagine 111, asparagine 132, and asparagine 272 are each glycosylated (N-linked (GlcNAc...) asparagine). Residue aspartate 286 is part of the active site. N-linked (GlcNAc...) asparagine glycosylation is found at asparagine 329 and asparagine 403. Alanine 463 carries GPI-anchor amidated alanine lipidation. Positions 464–487 are cleaved as a propeptide — removed in mature form; sequence PAGPTDVPKHLVLGAAAIGYVLAF.

The protein belongs to the peptidase A1 family.

The protein localises to the cell membrane. Functionally, probable GPI-anchored aspartic-type endopeptidase. The sequence is that of Probable aspartic-type endopeptidase opsB (opsB) from Aspergillus oryzae (strain ATCC 42149 / RIB 40) (Yellow koji mold).